The sequence spans 200 residues: Molybdenum cofactor guanylyltransferase (200 aa).

GTP-binding positions include 10–12, Lys23, Asn51, Asp69, and Asp99; that span reads LAG. Residue Asp99 coordinates Mg(2+).

This sequence belongs to the MobA family. As to quaternary structure, monomer. It depends on Mg(2+) as a cofactor.

The protein localises to the cytoplasm. It carries out the reaction Mo-molybdopterin + GTP + H(+) = Mo-molybdopterin guanine dinucleotide + diphosphate. Its function is as follows. Transfers a GMP moiety from GTP to Mo-molybdopterin (Mo-MPT) cofactor (Moco or molybdenum cofactor) to form Mo-molybdopterin guanine dinucleotide (Mo-MGD) cofactor. The sequence is that of Molybdenum cofactor guanylyltransferase from Shewanella halifaxensis (strain HAW-EB4).